A 205-amino-acid chain; its full sequence is Protein N-terminal glutamine amidohydrolase (205 aa).

Active-site residues include C20, H74, and D90.

The protein belongs to the NTAQ1 family. As to quaternary structure, monomer.

The enzyme catalyses N-terminal L-glutaminyl-[protein] + H2O = N-terminal L-glutamyl-[protein] + NH4(+). Functionally, mediates the side-chain deamidation of N-terminal glutamine residues to glutamate, an important step in N-end rule pathway of protein degradation. Conversion of the resulting N-terminal glutamine to glutamate renders the protein susceptible to arginylation, polyubiquitination and degradation as specified by the N-end rule. Does not act on substrates with internal or C-terminal glutamine and does not act on non-glutamine residues in any position. The chain is Protein N-terminal glutamine amidohydrolase (tun) from Drosophila ananassae (Fruit fly).